Here is a 195-residue protein sequence, read N- to C-terminus: Proline-rich protein 3 (195 aa).

Positions 1 to 29 (MKMNFFNSFPQYGVYILGLNLLLCGVSEG) are cleaved as a signal peptide.

Component of the acid-insoluble organic matrix of calcified layers of the shell (at protein level).

The protein localises to the secreted. This Lottia gigantea (Giant owl limpet) protein is Proline-rich protein 3.